We begin with the raw amino-acid sequence, 114 residues long: U-myrmeciitoxin(01)-Mg8a (114 aa).

The signal sequence occupies residues 1–20; that stretch reads MKLSTLLVAFVLLVITVILS. Positions 21–44 are excised as a propeptide; sequence TPSTNAKALAESNALAVAVSEAEP.

Belongs to the formicidae venom precursor-01 superfamily. Expressed by the venom gland.

It localises to the secreted. Its function is as follows. May have antimicrobial properties, like most ant linear peptides. The polypeptide is U-myrmeciitoxin(01)-Mg8a (Myrmecia gulosa (Red bulldog ant)).